The following is a 106-amino-acid chain: Probable NADP-dependent dehydrogenase in aabA 3'region (106 aa).

NADP(+) is bound at residue 4–28 (LITGASSGFGWEAAKLCVAKGHRVI).

It belongs to the short-chain dehydrogenases/reductases (SDR) family.

The sequence is that of Probable NADP-dependent dehydrogenase in aabA 3'region from Dichelobacter nodosus (Bacteroides nodosus).